We begin with the raw amino-acid sequence, 329 residues long: Isopentenyl-diphosphate delta-isomerase (329 aa).

Substrate is bound at residue 4–5 (RK). FMN contacts are provided by residues 59-61 (AMT), Ser-89, and Asn-116. Gln-146 is a substrate binding site. Glu-147 serves as a coordination point for Mg(2+). FMN-binding positions include Lys-178, Ser-203, Thr-208, 252–254 (GVR), and 273–274 (SR).

The protein belongs to the IPP isomerase type 2 family. In terms of assembly, homooctamer. Dimer of tetramers. Requires FMN as cofactor. The cofactor is NADPH. Mg(2+) serves as cofactor.

Its subcellular location is the cytoplasm. The enzyme catalyses isopentenyl diphosphate = dimethylallyl diphosphate. Involved in the biosynthesis of isoprenoids. Catalyzes the 1,3-allylic rearrangement of the homoallylic substrate isopentenyl (IPP) to its allylic isomer, dimethylallyl diphosphate (DMAPP). In Streptococcus pyogenes serotype M28 (strain MGAS6180), this protein is Isopentenyl-diphosphate delta-isomerase.